Reading from the N-terminus, the 1382-residue chain is Suppressor of organelle fusion 2 (1382 aa).

Positions 229 to 463 (RIPLDEATSN…QLFNRPHPIR (235 aa)) constitute a BEACH domain. 2 WD repeats span residues 1094–1133 (GHQEKIRKLAAISNENSFVSASSDKTVKLWSIKPELDEIG) and 1140–1176 (KHTRPVHDITILADNSIASTDGVLHVWDPFRTTLLAQ).

Belongs to the WD repeat WDR81 family. As to quaternary structure, interacts with sorf-1; the interaction is direct. Interacts with bec-1.

The protein localises to the early endosome. The protein resides in the late endosome. It localises to the cytoplasm. Together with sorf-1 negatively regulates the levels of phosphatidylinositol 3-phosphate (PtdIns3P) to enable the conversion of early endosomes to late endosomes. Binds to sorf-1 and the sorf-1-sorf-2 complex likely acts through bec-1, a non-catalytic subunit of phosphatidylinositol 3-kinase (PI3K), to suppress PI3K activity, thereby negatively regulating endosomal PtdIns3P levels. In Caenorhabditis elegans, this protein is Suppressor of organelle fusion 2.